Reading from the N-terminus, the 264-residue chain is Proteasome subunit beta type-4 (264 aa).

At M1 the chain carries N-acetylmethionine. A propeptide spanning residues 1–45 (MEAFWESRAGHWAGGPAPGQFYRIPATPSGLMDPASAPCEGPITR) is cleaved from the precursor. Y102 bears the Phosphotyrosine mark.

This sequence belongs to the peptidase T1B family. The 26S proteasome consists of a 20S proteasome core and two 19S regulatory subunits. The 20S proteasome core is a barrel-shaped complex made of 28 subunits that are arranged in four stacked rings. The two outer rings are each formed by seven alpha subunits, and the two inner rings are formed by seven beta subunits. The proteolytic activity is exerted by three beta-subunits PSMB5, PSMB6 and PSMB7. Forms a ternary complex with SMAD1 and OAZ1 before PSMB4 is incorporated into the 20S proteasome. Interacts with PRPF19. As to expression, detected in liver (at protein level).

The protein resides in the cytoplasm. It is found in the nucleus. Non-catalytic component of the 20S core proteasome complex involved in the proteolytic degradation of most intracellular proteins. This complex plays numerous essential roles within the cell by associating with different regulatory particles. Associated with two 19S regulatory particles, forms the 26S proteasome and thus participates in the ATP-dependent degradation of ubiquitinated proteins. The 26S proteasome plays a key role in the maintenance of protein homeostasis by removing misfolded or damaged proteins that could impair cellular functions, and by removing proteins whose functions are no longer required. Associated with the PA200 or PA28, the 20S proteasome mediates ubiquitin-independent protein degradation. This type of proteolysis is required in several pathways including spermatogenesis (20S-PA200 complex) or generation of a subset of MHC class I-presented antigenic peptides (20S-PA28 complex). SMAD1/OAZ1/PSMB4 complex mediates the degradation of the CREBBP/EP300 repressor SNIP1. In Mus musculus (Mouse), this protein is Proteasome subunit beta type-4 (Psmb4).